The following is a 202-amino-acid chain: Ribonuclease HII (202 aa).

The region spanning 1–195 is the RNase H type-2 domain; sequence MIVAGVDEVG…PELKGGSPAG (195 aa). A divalent metal cation is bound by residues Asp7, Glu8, and Asp103.

It belongs to the RNase HII family. Mn(2+) is required as a cofactor. It depends on Mg(2+) as a cofactor.

Its subcellular location is the cytoplasm. It catalyses the reaction Endonucleolytic cleavage to 5'-phosphomonoester.. Functionally, endonuclease that specifically degrades the RNA of RNA-DNA hybrids. This chain is Ribonuclease HII, found in Synechococcus sp. (strain RCC307).